We begin with the raw amino-acid sequence, 521 residues long: Two-component response regulator ARR11 (521 aa).

The region spanning arginine 12–leucine 127 is the Response regulatory domain. Position 63 is a 4-aspartylphosphate (aspartate 63). Positions lysine 192–arginine 195 match the Nuclear localization signal motif. The segment at residues arginine 195–arginine 246 is a DNA-binding region (myb-like GARP).

This sequence belongs to the ARR family. Type-B subfamily. In terms of assembly, binds the target DNA as a monomer. Two-component system major event consists of a His-to-Asp phosphorelay between a sensor histidine kinase (HK) and a response regulator (RR). In plants, the His-to-Asp phosphorelay involves an additional intermediate named Histidine-containing phosphotransfer protein (HPt). This multistep phosphorelay consists of a His-Asp-His-Asp sequential transfer of a phosphate group between first a His and an Asp of the HK protein, followed by the transfer to a conserved His of the HPt protein and finally the transfer to an Asp in the receiver domain of the RR protein. In terms of tissue distribution, detected in the whole plant. Predominantly expressed in roots and stems.

The protein resides in the nucleus. Transcriptional activator that binds specifically to the DNA sequence 5'-[AG]GATT-3'. Functions as a response regulator involved in His-to-Asp phosphorelay signal transduction system. Phosphorylation of the Asp residue in the receiver domain activates the ability of the protein to promote the transcription of target genes. Could directly activate some type-A response regulators in response to cytokinins. The polypeptide is Two-component response regulator ARR11 (ARR11) (Arabidopsis thaliana (Mouse-ear cress)).